Consider the following 369-residue polypeptide: Probable peptidoglycan glycosyltransferase FtsW (369 aa).

Helical transmembrane passes span 11–31 (LLSV…SSSV), 48–68 (NFIH…VPIY), 77–97 (LILC…SNHG), 134–151 (TSTI…KLLL), 154–174 (PDFG…FLIG), 177–197 (FLFL…LIYF), 265–285 (LGYL…FQGM), and 306–326 (ISLL…GILP).

It belongs to the SEDS family. FtsW subfamily.

The protein resides in the cell inner membrane. The catalysed reaction is [GlcNAc-(1-&gt;4)-Mur2Ac(oyl-L-Ala-gamma-D-Glu-L-Lys-D-Ala-D-Ala)](n)-di-trans,octa-cis-undecaprenyl diphosphate + beta-D-GlcNAc-(1-&gt;4)-Mur2Ac(oyl-L-Ala-gamma-D-Glu-L-Lys-D-Ala-D-Ala)-di-trans,octa-cis-undecaprenyl diphosphate = [GlcNAc-(1-&gt;4)-Mur2Ac(oyl-L-Ala-gamma-D-Glu-L-Lys-D-Ala-D-Ala)](n+1)-di-trans,octa-cis-undecaprenyl diphosphate + di-trans,octa-cis-undecaprenyl diphosphate + H(+). It functions in the pathway cell wall biogenesis; peptidoglycan biosynthesis. Peptidoglycan polymerase that is essential for cell division. The chain is Probable peptidoglycan glycosyltransferase FtsW from Riesia pediculicola (strain USDA).